The sequence spans 411 residues: Corticotropin-releasing factor receptor 2 (411 aa).

Positions 1-19 (MDAALLLSLLEANCSLALA) form a signal peptide, not cleaved. Over 1 to 108 (MDAALLLSLL…EPILDDKQRK (108 aa)) the chain is Extracellular. Asn13, Asn41, Asn74, Asn86, and Asn94 each carry an N-linked (GlcNAc...) asparagine glycan. Disulfide bonds link Cys14–Cys50, Cys40–Cys83, and Cys64–Cys98. A helical transmembrane segment spans residues 109–139 (YDLHYRIALIINYLGHCVSVVALVAAFLLFL). Residues 140 to 146 (VLRSIRC) are Cytoplasmic-facing. Residues 147–171 (LRNVIHWNLITTFILRNITWFLLQL) form a helical membrane-spanning segment. Residues 172 to 185 (IDHEVHEGNEVWCR) lie on the Extracellular side of the membrane. A disulfide bridge links Cys184 with Cys254. A helical membrane pass occupies residues 186–214 (CVTTIFNYFVVTNFFWMFVEGCYLHTAIV). Over 215–221 (MTYSTEH) the chain is Cytoplasmic. Residues 222 to 249 (LRKWLFLFIGWCIPCPIIVAWAVGKLYY) traverse the membrane as a helical segment. Residues 250–265 (ENEQCWFGKEPGDLVD) lie on the Extracellular side of the membrane. A helical transmembrane segment spans residues 266–291 (YIYQGPIILVLLINFVFLFNIVRILM). The Cytoplasmic segment spans residues 292 to 302 (TKLRASTTSET). A helical membrane pass occupies residues 303–327 (IQYRKAVKATLVLLPLLGITYMLFF). Over 328–334 (VNPGEDD) the chain is Extracellular. Residues 335–364 (LSQIVFIYFNSFLQSFQGFFVSVFYCFFNG) form a helical membrane-spanning segment. The Cytoplasmic segment spans residues 365-411 (EVRSALRKRWHRWQDHHALRVPVARAMSIPTSPTRISFHSIKQTAAV).

This sequence belongs to the G-protein coupled receptor 2 family. As to quaternary structure, monomer. Interacts (via N-terminal extracellular domain) with CRF, UCN, UCN2 and UCN3. In terms of processing, a N-glycosylation site within the signal peptide impedes its proper cleavage and function. In terms of tissue distribution, predominantly expressed in limbic regions of the brain such as the lateral septum, the entorhinal cortex, the hypothalamic ventromedial nucleus and several amygdaloid nuclei. Also detectable in lung, kidney and heart.

The protein resides in the cell membrane. In terms of biological role, G-protein coupled receptor for CRH (corticotropin-releasing factor), UCN (urocortin), UCN2 and UCN3. Has high affinity for UCN. Ligand binding causes a conformation change that triggers signaling via guanine nucleotide-binding proteins (G proteins) and down-stream effectors, such as adenylate cyclase. Promotes the activation of adenylate cyclase, leading to increased intracellular cAMP levels. The polypeptide is Corticotropin-releasing factor receptor 2 (Crhr2) (Rattus norvegicus (Rat)).